Here is an 84-residue protein sequence, read N- to C-terminus: uncharacterized protein (84 aa).

Residues 25-45 (ILMTVAGFIIAFAILVFQISF) traverse the membrane as a helical segment.

It localises to the membrane. This is an uncharacterized protein from Bacillus anthracis.